A 426-amino-acid polypeptide reads, in one-letter code: 26S proteasome regulatory subunit 7 (426 aa).

209 to 216 (GPPGTGKT) contributes to the ATP binding site.

Belongs to the AAA ATPase family.

It localises to the cytoplasm. Its subcellular location is the nucleus. The 26S proteasome is involved in the ATP-dependent degradation of ubiquitinated proteins. The regulatory (or ATPase) complex confers ATP dependency and substrate specificity to the 26S complex. The protein is 26S proteasome regulatory subunit 7 (RPT1) of Spinacia oleracea (Spinach).